We begin with the raw amino-acid sequence, 75 residues long: Small ribosomal subunit protein bS18 (75 aa).

This sequence belongs to the bacterial ribosomal protein bS18 family. In terms of assembly, part of the 30S ribosomal subunit. Forms a tight heterodimer with protein bS6.

Its function is as follows. Binds as a heterodimer with protein bS6 to the central domain of the 16S rRNA, where it helps stabilize the platform of the 30S subunit. In Colwellia psychrerythraea (strain 34H / ATCC BAA-681) (Vibrio psychroerythus), this protein is Small ribosomal subunit protein bS18.